We begin with the raw amino-acid sequence, 465 residues long: UDP-N-acetylmuramoylalanine--D-glutamate ligase (465 aa).

ATP is bound at residue 112-118 (GTDGKTT).

This sequence belongs to the MurCDEF family.

The protein localises to the cytoplasm. The enzyme catalyses UDP-N-acetyl-alpha-D-muramoyl-L-alanine + D-glutamate + ATP = UDP-N-acetyl-alpha-D-muramoyl-L-alanyl-D-glutamate + ADP + phosphate + H(+). It participates in cell wall biogenesis; peptidoglycan biosynthesis. Its function is as follows. Cell wall formation. Catalyzes the addition of glutamate to the nucleotide precursor UDP-N-acetylmuramoyl-L-alanine (UMA). In Chlorobium limicola (strain DSM 245 / NBRC 103803 / 6330), this protein is UDP-N-acetylmuramoylalanine--D-glutamate ligase.